The sequence spans 687 residues: Elongation factor G (687 aa).

The tr-type G domain occupies 8-282 (NKFRNIGIMA…AVLAYLPSPL (275 aa)). Residues 17–24 (AHIDAGKT), 81–85 (DTPGH), and 135–138 (NKMD) each bind GTP.

This sequence belongs to the TRAFAC class translation factor GTPase superfamily. Classic translation factor GTPase family. EF-G/EF-2 subfamily.

It localises to the cytoplasm. Catalyzes the GTP-dependent ribosomal translocation step during translation elongation. During this step, the ribosome changes from the pre-translocational (PRE) to the post-translocational (POST) state as the newly formed A-site-bound peptidyl-tRNA and P-site-bound deacylated tRNA move to the P and E sites, respectively. Catalyzes the coordinated movement of the two tRNA molecules, the mRNA and conformational changes in the ribosome. This Clostridium novyi (strain NT) protein is Elongation factor G.